A 312-amino-acid chain; its full sequence is Methionyl-tRNA formyltransferase (312 aa).

110 to 113 (SLLP) lines the (6S)-5,6,7,8-tetrahydrofolate pocket.

It belongs to the Fmt family.

The catalysed reaction is L-methionyl-tRNA(fMet) + (6R)-10-formyltetrahydrofolate = N-formyl-L-methionyl-tRNA(fMet) + (6S)-5,6,7,8-tetrahydrofolate + H(+). In terms of biological role, attaches a formyl group to the free amino group of methionyl-tRNA(fMet). The formyl group appears to play a dual role in the initiator identity of N-formylmethionyl-tRNA by promoting its recognition by IF2 and preventing the misappropriation of this tRNA by the elongation apparatus. In Koribacter versatilis (strain Ellin345), this protein is Methionyl-tRNA formyltransferase.